The sequence spans 468 residues: MTISRADLQIASSAEPKTHGNLNESFAPEIRQTASTIASLSIFGTPSDQECQPIPVVPRSSSSDELRVWRVTSAGLVEVDAKTMGAFLDKPKTDKTNVHGEGNGIRYGMSSMQGWRICMEDSHIAEAIMSQSSPYKDWSFFAVFDGHAGHHIANRASSQLLEHLISSEEFREMTKTLEENNGVLTDSTLKLLEKGIKKGFLSFDEISKTSNDISKSGCTAVCAIVTPTHFIIGNLGDSRAVVAGKNEIFGTEDHKPYLEKERKRIEGAGGSVMIQRINGSLAVSRAFGDYEYKDDPRLPADQQLVSPEPDVYIRERNLENDQFMVVACDGIYDVMTNEELAEFVKDRLSVHSDLREVCDDVLDECLVKGSRDNMTMVVVCFPAAPEVNIHRKEAEEAWVSRVKTVINQFLDEAVAAEDFKQEEDMVTLKSILDKVTANGLLPTDLRVPEHTVTTLAQKILTQRDIKHV.

The tract at residues 1–23 (MTISRADLQIASSAEPKTHGNLN) is disordered. The region spanning 106–381 (RYGMSSMQGW…DNMTMVVVCF (276 aa)) is the PPM-type phosphatase domain. Aspartate 145, glycine 146, aspartate 329, and aspartate 372 together coordinate Mn(2+).

The protein belongs to the PP2C family. It depends on Mg(2+) as a cofactor. Requires Mn(2+) as cofactor. As to expression, expressed in neurons of the nerve ring and motor neurons of the ventral nerve cord.

The protein localises to the synapse. The catalysed reaction is O-phospho-L-seryl-[protein] + H2O = L-seryl-[protein] + phosphate. The enzyme catalyses O-phospho-L-threonyl-[protein] + H2O = L-threonyl-[protein] + phosphate. In terms of biological role, probable phosphatase which regulates axon termination in ALM and PLM neurons, and synaptic branch extension and/or stabilization in PLM neurons. Plays a role in synapse formation in GABAergic DD motor neurons probably by dephosphorylating pmk-3 thereby negatively regulating a MAP kinase pathway that includes dlk-1, mkk-4 and pmk-3. This is Protein phosphatase ppm-1.A from Caenorhabditis elegans.